The chain runs to 501 residues: Lysine--tRNA ligase (501 aa).

Residues glutamate 402 and glutamate 409 each contribute to the Mg(2+) site.

This sequence belongs to the class-II aminoacyl-tRNA synthetase family. In terms of assembly, homodimer. Requires Mg(2+) as cofactor.

It is found in the cytoplasm. It catalyses the reaction tRNA(Lys) + L-lysine + ATP = L-lysyl-tRNA(Lys) + AMP + diphosphate. The chain is Lysine--tRNA ligase from Helicobacter pylori (strain Shi470).